A 361-amino-acid polypeptide reads, in one-letter code: DNA replication and repair protein RecF (361 aa).

30–37 (GQNAQGKT) serves as a coordination point for ATP.

This sequence belongs to the RecF family.

Its subcellular location is the cytoplasm. Functionally, the RecF protein is involved in DNA metabolism; it is required for DNA replication and normal SOS inducibility. RecF binds preferentially to single-stranded, linear DNA. It also seems to bind ATP. This chain is DNA replication and repair protein RecF, found in Streptococcus gordonii (strain Challis / ATCC 35105 / BCRC 15272 / CH1 / DL1 / V288).